The chain runs to 85 residues: Putative membrane protein insertion efficiency factor (85 aa).

It belongs to the UPF0161 family.

It is found in the cell inner membrane. In terms of biological role, could be involved in insertion of integral membrane proteins into the membrane. The sequence is that of Putative membrane protein insertion efficiency factor from Shewanella woodyi (strain ATCC 51908 / MS32).